A 1038-amino-acid chain; its full sequence is Protein argonaute 1D (1038 aa).

Disordered stretches follow at residues 1-58 (MGSR…GAAP) and 110-134 (APHE…PRSL). Gly residues-rich tracts occupy residues 18–29 (RGGGRGGGGRGR) and 43–52 (GHGGRGGAGY). A compositionally biased stretch (low complexity) spans 115–134 (PANVSSPEAASPEASSPRSL). The region spanning 380-493 (PVIDFVIQLL…LPMEVCKIVE (114 aa)) is the PAZ domain. In terms of domain architecture, Piwi spans 669 to 990 (LLIGLLPDNN…AAFRARFYME (322 aa)). Positions 992-1021 (DSSDSGSMASGRGGGSSTSRSTRAAGGGAV) are disordered.

Belongs to the argonaute family. Ago subfamily.

In terms of biological role, probably involved in the RNA silencing pathway. May bind to short RNAs such as microRNAs (miRNAs) or short interfering RNAs (siRNAs), and represses the translation of mRNAs which are complementary to them. This chain is Protein argonaute 1D (AGO1D), found in Oryza sativa subsp. japonica (Rice).